Here is a 217-residue protein sequence, read N- to C-terminus: Probable GTP-binding protein EngB (217 aa).

The region spanning 44-217 (DRIEVCFAGR…TLRTIVATLG (174 aa)) is the EngB-type G domain. Residues 52-59 (GRSNVGKS), 79-83 (GRTQE), 97-100 (DLPG), 164-167 (TKAD), and 198-200 (TSS) contribute to the GTP site. The Mg(2+) site is built by S59 and T81.

The protein belongs to the TRAFAC class TrmE-Era-EngA-EngB-Septin-like GTPase superfamily. EngB GTPase family. Requires Mg(2+) as cofactor.

In terms of biological role, necessary for normal cell division and for the maintenance of normal septation. The protein is Probable GTP-binding protein EngB of Cereibacter sphaeroides (strain ATCC 17023 / DSM 158 / JCM 6121 / CCUG 31486 / LMG 2827 / NBRC 12203 / NCIMB 8253 / ATH 2.4.1.) (Rhodobacter sphaeroides).